Reading from the N-terminus, the 521-residue chain is NAD(P)H-quinone oxidoreductase subunit 2 (521 aa).

Transmembrane regions (helical) follow at residues 15–35 (ILPEGVLVISLILVLLGDITF), 42–62 (WTPYLAIASLAACLYLLYTQW), 79–99 (LSIVFRAIIALSTLVTILMSV), 109–126 (IGEFMTVLLTATVGAMFL), 131–153 (ELVMIFISLETLSIASYLMTGYM), 167–187 (LLIGAASSAVFLYGLSLLYGL), 208–228 (LALVISLVFVIASVSFKIAAV), 242–262 (PTPVVAFLSVGSKAAGFALAI), 276–296 (WQFIFTALAILSMVLGNVVAI), 304–324 (MLAYSSIGQAGFVMIGLVIGT), 332–352 (VFYLLIYLFMNLGAFTCVILF), 376–396 (LALSLCLLSLGGIPPLAGFFG), 398–418 (LYLFWAGWQAGAYGLVLLGLI), and 464–484 (VGLVLTLIATSLAGVLSNPLL).

Belongs to the complex I subunit 2 family. As to quaternary structure, NDH-1 can be composed of about 15 different subunits; different subcomplexes with different compositions have been identified which probably have different functions.

It localises to the cellular thylakoid membrane. The enzyme catalyses a plastoquinone + NADH + (n+1) H(+)(in) = a plastoquinol + NAD(+) + n H(+)(out). It catalyses the reaction a plastoquinone + NADPH + (n+1) H(+)(in) = a plastoquinol + NADP(+) + n H(+)(out). Its function is as follows. NDH-1 shuttles electrons from an unknown electron donor, via FMN and iron-sulfur (Fe-S) centers, to quinones in the respiratory and/or the photosynthetic chain. The immediate electron acceptor for the enzyme in this species is believed to be plastoquinone. Couples the redox reaction to proton translocation, and thus conserves the redox energy in a proton gradient. Cyanobacterial NDH-1 also plays a role in inorganic carbon-concentration. This Acaryochloris marina (strain MBIC 11017) protein is NAD(P)H-quinone oxidoreductase subunit 2.